Here is a 284-residue protein sequence, read N- to C-terminus: Tropomyosin (284 aa).

Positions 1–273 (MDAIKKKMLA…KEKYKAISDE (273 aa)) form a coiled coil.

It belongs to the tropomyosin family. In terms of assembly, homodimer.

In terms of biological role, tropomyosin, in association with the troponin complex, plays a central role in the calcium dependent regulation of muscle contraction. This Haliotis diversicolor (Abalone) protein is Tropomyosin.